A 155-amino-acid polypeptide reads, in one-letter code: Small ribosomal subunit protein uS7cz/uS7cy (155 aa).

The protein belongs to the universal ribosomal protein uS7 family. In terms of assembly, part of the 30S ribosomal subunit.

Its subcellular location is the plastid. It localises to the chloroplast. Its function is as follows. One of the primary rRNA binding proteins, it binds directly to 16S rRNA where it nucleates assembly of the head domain of the 30S subunit. The chain is Small ribosomal subunit protein uS7cz/uS7cy (rps7-A) from Lactuca sativa (Garden lettuce).